The chain runs to 238 residues: Protein Iojap, chloroplastic (238 aa).

The N-terminal 66 residues, 1-66, are a transit peptide targeting the chloroplast; the sequence is MASSTGLTVA…KILTSLSNSR (66 aa).

This sequence belongs to the Iojap/RsfS family. As to quaternary structure, interacts with chloroplast ribosomal protein uL14c (rpl14).

Its subcellular location is the plastid. The protein resides in the chloroplast. Its function is as follows. May be a ribosome silencing factor (Potential). Involved in plastid biogenesis. The chain is Protein Iojap, chloroplastic (IJ) from Arabidopsis thaliana (Mouse-ear cress).